The chain runs to 353 residues: Polyprenal reductase 2 (353 aa).

A run of 6 helical transmembrane segments spans residues 11-31 (PLLC…ALPI), 78-98 (FMHF…AIWF), 175-195 (MHIV…LSLA), 234-254 (PLLK…WGSL), 291-308 (YLAE…SGAE), and 313-335 (WFLF…NWYL).

Belongs to the steroid 5-alpha reductase family. Polyprenal reductase subfamily.

It is found in the cell membrane. The catalysed reaction is a di-trans,poly-cis-dolichal + NADP(+) = a di-trans,poly-cis-polyprenal + NADPH + H(+). The protein operates within protein modification; protein glycosylation. In terms of biological role, plays a key role in early steps of protein N-linked glycosylation by being involved in the conversion of polyprenol into dolichol. Acts as a polyprenal reductase that mediates the reduction of polyprenal into dolichal in a NADP-dependent mechanism. Dolichols are required for the synthesis of dolichol-linked monosaccharides and the oligosaccharide precursor used for N-glycosylation. The sequence is that of Polyprenal reductase 2 from Oryza sativa subsp. indica (Rice).